A 439-amino-acid polypeptide reads, in one-letter code: MKSIVISSNSSGGGKTTIAVGIMKALMKKGFDVQGYKVGPDYIDPAFHSQITGKPSRNLDIYLTGEEGVKASYSRGKGNLGVVEGVMGLYDGKGIDSKYSTAHVAKTLGLPVVLVLSPKAQSATLCAEINGLINFDKVEIGGIILNNISESYYNLLKAAIEYNCNAKVLGYIPKDERLKIGSRHLGLIQSSEIEDLEEKIDICSEHILKNIDLEELFKIFKKTPEYEDNFHLENKNLKIAVAYDKAFSFYYRDNIELLEELGEITYFSPLMDKELPKDIDFLYIGGGYPEVFIEELSKNESMLKSIKEELDKGLKCYAECGGLMYLTEAIENEDLKGNAVGYFEGFSKMTKRLQNFGYAQLEVYKENEILPKGLKINCHEFHKSTVELDEDKIFKINKTMYNGDTKHWNCGYIKGNTIAAYAHVNFLGNIEFLKALLEK.

Residues 238–431 (KIAVAYDKAF…AHVNFLGNIE (194 aa)) form the GATase cobBQ-type domain. Cys-320 serves as the catalytic Nucleophile.

The protein belongs to the CobB/CbiA family. Requires Mg(2+) as cofactor.

It catalyses the reaction cob(II)yrinate + 2 L-glutamine + 2 ATP + 2 H2O = cob(II)yrinate a,c diamide + 2 L-glutamate + 2 ADP + 2 phosphate + 2 H(+). Its pathway is cofactor biosynthesis; adenosylcobalamin biosynthesis; cob(II)yrinate a,c-diamide from sirohydrochlorin (anaerobic route): step 10/10. Its function is as follows. Catalyzes the ATP-dependent amidation of the two carboxylate groups at positions a and c of cobyrinate, using either L-glutamine or ammonia as the nitrogen source. The protein is Cobyrinate a,c-diamide synthase of Clostridium tetani (strain Massachusetts / E88).